The primary structure comprises 507 residues: Protoheme IX farnesyltransferase, mitochondrial (507 aa).

The span at serine 72–threonine 90 shows a compositional bias: low complexity. A disordered region spans residues serine 72–alanine 136. Residues lysine 99–alanine 111 show a composition bias toward basic residues. 8 helical membrane-spanning segments follow: residues leucine 166–methionine 186, proline 199–leucine 219, alanine 248–valine 268, proline 270–leucine 290, threonine 298–glycine 318, isoleucine 339–leucine 359, phenylalanine 392–alanine 412, and glycine 441–lysine 461.

It belongs to the UbiA prenyltransferase family.

It is found in the mitochondrion membrane. It carries out the reaction heme b + (2E,6E)-farnesyl diphosphate + H2O = Fe(II)-heme o + diphosphate. Its function is as follows. Converts protoheme IX and farnesyl diphosphate to heme O. The protein is Protoheme IX farnesyltransferase, mitochondrial (COX10) of Gibberella zeae (strain ATCC MYA-4620 / CBS 123657 / FGSC 9075 / NRRL 31084 / PH-1) (Wheat head blight fungus).